The following is a 773-amino-acid chain: MIRDLSKMYPQTRHPAPHQPAQPFKFTISESCDRIKEEFQFLQAQYHSLKLECEKLASEKTEMQRHYVMYYEMSYGLNIEMHKQAEIVKRLNAICAQVIPFLSQEHQQQVVQAVERAKQVTMAELNAIIGQQLQAQHLSHGHGLPVPLTPHPSGLQPPAIPPIGSSAGLLALSSALGGQSHLPIKDEKKHHDNDHQRDRDSIKSSSVSPSASFRGSEKHRNSTDYSSESKKQKTEEKEIAARYDSDGEKSDDNLVVDVSNEDPSSPRGSPAHSPRENGLDKTRLLKKDAPISPASVASSSSTPSSKSKELSLNEKSTTPVSKSNTPTPRTDAPTPGSNSTPGLRPVPGKPPGVDPLASSLRTPMAVPCPYPTPFGIVPHAGMNGELTSPGAAYAGLHNISPQMSAAAAAAAAAAAYGRSPVVGFDPHHHMRVPAIPPNLTGIPGGKPAYSFHVSADGQMQPVPFPPDALIGPGIPRHARQINTLNHGEVVCAVTISNPTRHVYTGGKGCVKVWDISHPGNKSPVSQLDCLNRDNYIRSCRLLPDGRTLIVGGEASTLSIWDLAAPTPRIKAELTSSAPACYALAISPDSKVCFSCCSDGNIAVWDLHNQTLVRQFQGHTDGASCIDISNDGTKLWTGGLDNTVRSWDLREGRQLQQHDFTSQIFSLGYCPTGEWLAVGMENSNVEVLHVTKPDKYQLHLHESCVLSLKFAHCGKWFVSTGKDNLLNAWRTPYGASIFQSKESSSVLSCDISVDDKYIVTGSGDKKATVYEVIY.

Disordered stretches follow at residues 1–22 (MIRD…QPAQ), 140–162 (HGHG…AIPP), and 182–357 (LPIK…DPLA). The interval 1–136 (MIRDLSKMYP…AIIGQQLQAQ (136 aa)) is q domain. Positions 137 to 204 (HLSHGHGLPV…HQRDRDSIKS (68 aa)) are GP domain. Residues 183 to 202 (PIKDEKKHHDNDHQRDRDSI) are compositionally biased toward basic and acidic residues. The span at 203 to 214 (KSSSVSPSASFR) shows a compositional bias: low complexity. The tract at residues 205–274 (SSVSPSASFR…SPRGSPAHSP (70 aa)) is ccN domain. Phosphoserine occurs at positions 208, 212, 216, and 222. Residues 215 to 252 (GSEKHRNSTDYSSESKKQKTEEKEIAARYDSDGEKSDD) show a composition bias toward basic and acidic residues. K237 is modified (N6-acetyllysine). Position 245 is a phosphoserine (S245). At S250 the chain carries Phosphoserine; by CK2. A Phosphoserine; by CDK1 modification is found at S265. Phosphoserine is present on residues S269 and S273. The segment covering 273–289 (SPRENGLDKTRLLKKDA) has biased composition (basic and acidic residues). Residues 275–452 (RENGLDKTRL…PGGKPAYSFH (178 aa)) form an SP domain region. K281 bears the N6-acetyllysine mark. Low complexity predominate over residues 290–305 (PISPASVASSSSTPSS). A Phosphoserine modification is found at S292. A compositionally biased stretch (polar residues) spans 317 to 328 (TTPVSKSNTPTP). T318 is modified (phosphothreonine). A phosphoserine mark is found at S321 and S323. Phosphothreonine is present on residues T325, T327, T334, and T340. S419 bears the Phosphoserine mark. 7 WD repeats span residues 485–523 (NHGE…NKSP), 531–570 (NRDN…PRIK), 575–614 (SSAP…LVRQ), 617–656 (GHTD…QLQQ), 658–697 (DFTS…KYQL), 699–738 (LHES…SIFQ), and 740–773 (KESS…EVIY).

This sequence belongs to the WD repeat Groucho/TLE family. In terms of assembly, homooligomer and heterooligomer with other family members. Interacts with PAX5. Interacts with LEF1, TCF7, TCF7L1 and TCF7L2. Interacts with ZNF703; TLE4 may mediate ZNF703 transcriptional repression. Interacts with SIX3 and SIX6. Interacts with PAX2. Interacts with TLE1. Post-translationally, phosphorylated. PAX5 binding increases phosphorylation. Ubiquitinated by XIAP/BIRC4. In terms of tissue distribution, expressed in bone marrow-derived macrophages.

It localises to the nucleus. In terms of biological role, transcriptional corepressor that binds to a number of transcription factors. Inhibits the transcriptional activation mediated by PAX5, and by CTNNB1 and TCF family members in Wnt signaling. The effects of full-length TLE family members may be modulated by association with dominant-negative AES. Essential for the transcriptional repressor activity of SIX3 during retina and lens development and for SIX3 transcriptional auto-repression. Involved in transcriptional repression of GNRHR and enhances MSX1-mediated transcriptional repression of CGA/alpha-GSU. This is Transducin-like enhancer protein 4 (Tle4) from Mus musculus (Mouse).